Consider the following 255-residue polypeptide: MLLGVNIDHIAVLREARKVNDPDLLEAAFLSANLADQITIHVREDRRHANEKDLENILKYCKCVVNLECSIDMIEYALKYKPSRVTLVPEKRQELTTEGGLNLNNDKLQEVILKLKQEQIEVSLFIDPNLEDIEKSSLLKADFIELHTGLYANIYNALYTNINQTSYALPELILSKNELKKLLENELQRLRQSASLAKSLNLNVAAGHGLNYKNVKNIVDILEIKELNIGQSIVARSVFVGLEKAILEMRALIKR.

Asn6 lines the 3-amino-2-oxopropyl phosphate pocket. 8 to 9 (DH) contacts 1-deoxy-D-xylulose 5-phosphate. Arg17 serves as a coordination point for 3-amino-2-oxopropyl phosphate. His41 (proton acceptor) is an active-site residue. 2 residues coordinate 1-deoxy-D-xylulose 5-phosphate: Arg43 and His48. Glu68 serves as the catalytic Proton acceptor. Thr96 contacts 1-deoxy-D-xylulose 5-phosphate. His208 functions as the Proton donor in the catalytic mechanism. Residues Gly209 and 230–231 (GQ) contribute to the 3-amino-2-oxopropyl phosphate site.

This sequence belongs to the PNP synthase family. Homooctamer; tetramer of dimers.

The protein resides in the cytoplasm. The enzyme catalyses 3-amino-2-oxopropyl phosphate + 1-deoxy-D-xylulose 5-phosphate = pyridoxine 5'-phosphate + phosphate + 2 H2O + H(+). It participates in cofactor biosynthesis; pyridoxine 5'-phosphate biosynthesis; pyridoxine 5'-phosphate from D-erythrose 4-phosphate: step 5/5. In terms of biological role, catalyzes the complicated ring closure reaction between the two acyclic compounds 1-deoxy-D-xylulose-5-phosphate (DXP) and 3-amino-2-oxopropyl phosphate (1-amino-acetone-3-phosphate or AAP) to form pyridoxine 5'-phosphate (PNP) and inorganic phosphate. The protein is Pyridoxine 5'-phosphate synthase of Campylobacter lari (strain RM2100 / D67 / ATCC BAA-1060).